A 165-amino-acid polypeptide reads, in one-letter code: Large ribosomal subunit protein uL10 (165 aa).

This sequence belongs to the universal ribosomal protein uL10 family. Part of the ribosomal stalk of the 50S ribosomal subunit. The N-terminus interacts with L11 and the large rRNA to form the base of the stalk. The C-terminus forms an elongated spine to which L12 dimers bind in a sequential fashion forming a multimeric L10(L12)X complex.

Its function is as follows. Forms part of the ribosomal stalk, playing a central role in the interaction of the ribosome with GTP-bound translation factors. In Burkholderia lata (strain ATCC 17760 / DSM 23089 / LMG 22485 / NCIMB 9086 / R18194 / 383), this protein is Large ribosomal subunit protein uL10.